The primary structure comprises 345 residues: DNA-directed RNA polymerase subunit alpha (345 aa).

The tract at residues M1–H233 is alpha N-terminal domain (alpha-NTD). An alpha C-terminal domain (alpha-CTD) region spans residues L256–G345.

This sequence belongs to the RNA polymerase alpha chain family. As to quaternary structure, homodimer. The RNAP catalytic core consists of 2 alpha, 1 beta, 1 beta' and 1 omega subunit. When a sigma factor is associated with the core the holoenzyme is formed, which can initiate transcription.

The enzyme catalyses RNA(n) + a ribonucleoside 5'-triphosphate = RNA(n+1) + diphosphate. DNA-dependent RNA polymerase catalyzes the transcription of DNA into RNA using the four ribonucleoside triphosphates as substrates. The chain is DNA-directed RNA polymerase subunit alpha from Syntrophus aciditrophicus (strain SB).